The following is a 421-amino-acid chain: MYFIDEAINEIKAGNGGNGVVSFRKEKYVPLGGPDGGNGGKGGSIFFIGEQSENNLLKLKYQKHLKAKNGENGKNKNKHGANAENIYIKVPLGTIIYNLQNEITGEILKHGEILTIAKGGRGGKGNKSLATFKNPVPKYAEKGGIGESFKIKTELKILADVGLIGYPSVGKSTLISIISDAKPKIADYPFTTLKPYLGMVYVDNESFIVADLPGLIPNAHLGKGMGIKFLKHIERCRILIHMCDMSKSNPLQDIENLNQELKIYNKNLLKKPQIIIANKMDIIGAKTKLIELQKKILNKNIIPTSLLKNQNLKILKYKMLEMIKKNVVNLPLCENSSFKTYTLEEEKPDFVIKKDNQGFFVVKGEKIEKFFYKTDFNNEEATKKFAIFLKKIGVEEELIKKGVYFSKNKIKICDRVFEFIT.

In terms of domain architecture, Obg spans 1–158 (MYFIDEAINE…FKIKTELKIL (158 aa)). One can recognise an OBG-type G domain in the interval 159–324 (ADVGLIGYPS…LKYKMLEMIK (166 aa)). GTP-binding positions include 165 to 172 (GYPSVGKS), 190 to 194 (FTTLK), 211 to 214 (DLPG), 278 to 281 (NKMD), and 305 to 307 (SLL). Mg(2+)-binding residues include Ser-172 and Thr-192. The OCT domain maps to 342-421 (TLEEEKPDFV…ICDRVFEFIT (80 aa)).

The protein belongs to the TRAFAC class OBG-HflX-like GTPase superfamily. OBG GTPase family. In terms of assembly, monomer. Mg(2+) is required as a cofactor.

It localises to the cytoplasm. Its function is as follows. An essential GTPase which binds GTP, GDP and possibly (p)ppGpp with moderate affinity, with high nucleotide exchange rates and a fairly low GTP hydrolysis rate. Plays a role in control of the cell cycle, stress response, ribosome biogenesis and in those bacteria that undergo differentiation, in morphogenesis control. In Phytoplasma mali (strain AT), this protein is GTPase Obg.